Here is a 38-residue protein sequence, read N- to C-terminus: MSMRLVVVLLPLGIALGWAVYNIGKLAIEQWRRTGSKV.

Topologically, residues 1-4 are lumenal; it reads MSMR. Residues 5 to 23 form a helical membrane-spanning segment; the sequence is LVVVLLPLGIALGWAVYNI. The Stromal segment spans residues 24 to 38; it reads GKLAIEQWRRTGSKV.

It belongs to the PsbY family. PSII is composed of 1 copy each of membrane proteins PsbA, PsbB, PsbC, PsbD, PsbE, PsbF, PsbH, PsbI, PsbJ, PsbK, PsbL, PsbM, PsbT, PsbX, PsbY, PsbZ, Psb30/Ycf12, at least 3 peripheral proteins of the oxygen-evolving complex and a large number of cofactors. It forms dimeric complexes.

It is found in the plastid. Its subcellular location is the cyanelle thylakoid membrane. In terms of biological role, loosely associated component of the core of photosystem II (PSII), it is not always seen in crystals. PSII is a light-driven water plastoquinone oxidoreductase, using light energy to abstract electrons from H(2)O, generating a proton gradient subsequently used for ATP formation. This Cyanophora paradoxa protein is Photosystem II reaction center protein Y.